A 381-amino-acid polypeptide reads, in one-letter code: MAEGKKTDDYTIQMDSIDQGNKSFEAPPPPQPRSPPSGSLSNNPILPVLAYCGSSILMTVMNKYVLSGTDFNLNFFLLCIQSLVCIIAIQTCKSCGLITYRDFSADEARKWFPITLLLIGMIYTGSKALQFLSIPVYTIFKNLTIILIAYGEVLWFGGSVTGLTLFSFGLMVLSSIIAAWADIKHAVESNGDATAKVSTLNAGYIWMLVNCLCTSSYVLGMRKRIKLTNFKDFDTMFYNNLLSIPVLIVLSAFLEDWSSTNVNRNFPPMDRNSIVFAMILSGLSSVFISYTSAWCVRVTSSTTYSMVGALNKLPIAISGLIFFDAPVTFPSVSAIVVGFVSGIVYAVAKIKQNAKPRTGVLPTANPPVSASSQSMRDSLRS.

Topologically, residues methionine 1–proline 44 are cytoplasmic. Positions glutamine 19–serine 41 are disordered. Residues alanine 26–proline 35 show a composition bias toward pro residues. A helical transmembrane segment spans residues isoleucine 45–valine 65. Topologically, residues leucine 66 to aspartate 70 are lumenal. The helical transmembrane segment at phenylalanine 71–threonine 91 threads the bilayer. Topologically, residues cysteine 92–arginine 109 are cytoplasmic. The chain crosses the membrane as a helical span at residues lysine 110–serine 126. Topologically, residues lysine 127–serine 133 are lumenal. Residues isoleucine 134–tyrosine 150 form a helical membrane-spanning segment. At glycine 151–serine 159 the chain is on the cytoplasmic side. The chain crosses the membrane as a helical span at residues valine 160 to alanine 181. Topologically, residues aspartate 182–threonine 199 are lumenal. The chain crosses the membrane as a helical span at residues leucine 200–glycine 220. The Cytoplasmic portion of the chain corresponds to methionine 221 to aspartate 234. Residues threonine 235 to glutamate 255 traverse the membrane as a helical segment. At aspartate 256–serine 273 the chain is on the lumenal side. Residues isoleucine 274–tryptophan 294 form a helical membrane-spanning segment. Residues cysteine 295–threonine 302 lie on the Cytoplasmic side of the membrane. A helical transmembrane segment spans residues threonine 303–phenylalanine 323. The Lumenal segment spans residues aspartate 324–proline 326. A helical transmembrane segment spans residues valine 327–valine 347. Topologically, residues alanine 348–serine 381 are cytoplasmic. Residues threonine 358–serine 381 are disordered. Positions proline 366–serine 381 are enriched in polar residues.

It belongs to the TPT transporter family. SLC35D subfamily. Homooligomer.

The protein resides in the golgi apparatus membrane. The protein localises to the cytoplasmic vesicle membrane. It is found in the endoplasmic reticulum membrane. Involved in the import of GDP-mannose from the cytoplasm into the Golgi lumen. The polypeptide is GDP-mannose transporter (gmt1) (Aspergillus niger (strain ATCC MYA-4892 / CBS 513.88 / FGSC A1513)).